The sequence spans 679 residues: UvrABC system protein B (679 aa).

The region spanning 31–414 is the Helicase ATP-binding domain; it reads ENLTDGLAHQ…ELEKSGTEII (384 aa). 44–51 lines the ATP pocket; the sequence is GVTGSGKT. The Beta-hairpin signature appears at 97–120; sequence YYDYYQPEAYVPSSDTFIEKDASI. The Helicase C-terminal domain maps to 436–589; that stretch reads QVDDLLSEAR…QIKYNEEHGI (154 aa). The UVR domain maps to 639–674; the sequence is QQQIKKLEQQMYKFAQDLEFEKAAAIRDQLHQLREQ.

The protein belongs to the UvrB family. In terms of assembly, forms a heterotetramer with UvrA during the search for lesions. Interacts with UvrC in an incision complex.

The protein localises to the cytoplasm. The UvrABC repair system catalyzes the recognition and processing of DNA lesions. A damage recognition complex composed of 2 UvrA and 2 UvrB subunits scans DNA for abnormalities. Upon binding of the UvrA(2)B(2) complex to a putative damaged site, the DNA wraps around one UvrB monomer. DNA wrap is dependent on ATP binding by UvrB and probably causes local melting of the DNA helix, facilitating insertion of UvrB beta-hairpin between the DNA strands. Then UvrB probes one DNA strand for the presence of a lesion. If a lesion is found the UvrA subunits dissociate and the UvrB-DNA preincision complex is formed. This complex is subsequently bound by UvrC and the second UvrB is released. If no lesion is found, the DNA wraps around the other UvrB subunit that will check the other stand for damage. In Haemophilus influenzae (strain 86-028NP), this protein is UvrABC system protein B.